Consider the following 313-residue polypeptide: Protein YABBY 3 (313 aa).

Residues 65-92 (CHYCDTVLVVSVPSSSLFETVTVRCGHC) form a C4-type zinc finger. Disordered regions lie at residues 107–149 (TTAA…SLLD) and 180–221 (NNSP…KRQR). Over residues 112–128 (APPPPPPPPPPPPPPAA) the composition is skewed to pro residues.

This sequence belongs to the YABBY family. In terms of tissue distribution, expressed in shoot apex and young inflorescences.

It is found in the nucleus. The protein is Protein YABBY 3 (YAB3) of Oryza sativa subsp. japonica (Rice).